A 62-amino-acid polypeptide reads, in one-letter code: Large ribosomal subunit protein bL33 (62 aa).

It belongs to the bacterial ribosomal protein bL33 family.

The protein is Large ribosomal subunit protein bL33 of Parabacteroides distasonis (strain ATCC 8503 / DSM 20701 / CIP 104284 / JCM 5825 / NCTC 11152).